We begin with the raw amino-acid sequence, 310 residues long: 2-methoxy-6-polyprenyl-1,4-benzoquinol methylase, mitochondrial (310 aa).

Residues 1–6 (MAHMRS) constitute a mitochondrion transit peptide. Residues Thr99, Asp154, and 182 to 183 (DA) each bind S-adenosyl-L-methionine.

It belongs to the class I-like SAM-binding methyltransferase superfamily. MenG/UbiE family. As to quaternary structure, component of a multi-subunit COQ enzyme complex, composed of at least coq3, coq4, coq5, coq6, coq7 and coq9.

It is found in the mitochondrion inner membrane. The enzyme catalyses a 2-methoxy-6-(all-trans-polyprenyl)benzene-1,4-diol + S-adenosyl-L-methionine = a 5-methoxy-2-methyl-3-(all-trans-polyprenyl)benzene-1,4-diol + S-adenosyl-L-homocysteine + H(+). It participates in cofactor biosynthesis; ubiquinone biosynthesis. Its function is as follows. Methyltransferase required for the conversion of 2-polyprenyl-6-methoxy-1,4-benzoquinol (DDMQH2) to 2-polyprenyl-3-methyl-6-methoxy-1,4-benzoquinol (DMQH2). The chain is 2-methoxy-6-polyprenyl-1,4-benzoquinol methylase, mitochondrial from Xenopus laevis (African clawed frog).